The chain runs to 629 residues: Citrate (Re)-synthase (629 aa).

The 271-residue stretch at 59–329 (IFITDTTFRD…TNGIDTTVIT (271 aa)) folds into the Pyruvate carboxyltransferase domain. A Cache domain is found at 497–601 (VMQRFIEEYP…GVDIRVEDLV (105 aa)).

The protein belongs to the alpha-IPM synthase/homocitrate synthase family. Homotetramer. The cofactor is Co(2+). Mn(2+) is required as a cofactor.

It carries out the reaction oxaloacetate + acetyl-CoA + H2O = citrate + CoA + H(+). With respect to regulation, inhibited by p-hydroxymercuribenzoate and EDTA. In terms of biological role, catalyzes the condensation of the acetyl group of acetyl-CoA with oxaloacetate to form citrate. This Syntrophus aciditrophicus (strain SB) protein is Citrate (Re)-synthase.